Consider the following 340-residue polypeptide: MFQQQKDWETRENAFAAFTMGPLTDFWRQRDEAEFTGVDDIPVRFVRFRAQHHDRVVVICPGRIESYVKYAELAYDLFHLGFDVLIIDHRGQGRSGRLLADPHLGHVNRFNDYVDDLAAFWQQEVQPGPWRKRYILAHSMGGAISTLFLQRHPGVCDAIALTAPMFGIVIRMPSFMARQILNWAEAHPRFRDGYAIGTGRWRALPFAINVLTHSRQRYRRNLRFYADDPTIRVGGPTYHWVRESILAGEQVLAGAGDDATPTLLLQAEEERVVDNRMHDRFCELRTAAGHPVEGGRPLVIKGAYHEILFEKDAMRSVALHAIVDFFNRHNSPSGNRSTEV.

Its subcellular location is the cell inner membrane. The enzyme catalyses a 1-acyl-sn-glycero-3-phosphocholine + H2O = sn-glycerol 3-phosphocholine + a fatty acid + H(+). The polypeptide is Lysophospholipase L2 (pldB) (Escherichia coli O6:H1 (strain CFT073 / ATCC 700928 / UPEC)).